Here is a 92-residue protein sequence, read N- to C-terminus: Defensin-like protein 249 (92 aa).

Positions 1-24 are cleaved as a signal peptide; sequence MKLAAIFLASSVLLSLLPIHLSQG. 4 disulfide bridges follow: Cys34–Cys91, Cys45–Cys74, Cys53–Cys84, and Cys72–Cys86.

Belongs to the DEFL family.

The protein localises to the secreted. This Arabidopsis thaliana (Mouse-ear cress) protein is Defensin-like protein 249 (SCRL7).